The primary structure comprises 229 residues: Uracil-DNA glycosylase (229 aa).

D67 functions as the Proton acceptor in the catalytic mechanism.

This sequence belongs to the uracil-DNA glycosylase (UDG) superfamily. UNG family.

It is found in the cytoplasm. The enzyme catalyses Hydrolyzes single-stranded DNA or mismatched double-stranded DNA and polynucleotides, releasing free uracil.. Excises uracil residues from the DNA which can arise as a result of misincorporation of dUMP residues by DNA polymerase or due to deamination of cytosine. The protein is Uracil-DNA glycosylase of Coxiella burnetii (strain RSA 493 / Nine Mile phase I).